The primary structure comprises 224 residues: Type VII secretion system protein EsaE (224 aa).

Interacts with EssD.

In terms of biological role, component of the type VII secretion system (Ess). Plays a role in Esx protein secretion. Plays an essential role in the processing and secretion of EssD. The protein is Type VII secretion system protein EsaE of Staphylococcus aureus (strain USA300).